The sequence spans 385 residues: Glucose-fructose oxidoreductase domain-containing protein 2 (385 aa).

Positions 1–25 are cleaved as a signal peptide; sequence MKLLPGVGVFGTGSSARVLVPLLRA.

This sequence belongs to the Gfo/Idh/MocA family.

The protein localises to the secreted. Its subcellular location is the extracellular space. The protein resides in the extracellular matrix. Promotes matrix assembly. The polypeptide is Glucose-fructose oxidoreductase domain-containing protein 2 (Gfod2) (Mus musculus (Mouse)).